We begin with the raw amino-acid sequence, 119 residues long: Large ribosomal subunit protein uL18 (119 aa).

Positions 1–20 (MSQIDKAARRQKIKARSRAT) are disordered. Positions 9–19 (RRQKIKARSRA) are enriched in basic residues.

It belongs to the universal ribosomal protein uL18 family. In terms of assembly, part of the 50S ribosomal subunit; part of the 5S rRNA/L5/L18/L25 subcomplex. Contacts the 5S and 23S rRNAs.

Functionally, this is one of the proteins that bind and probably mediate the attachment of the 5S RNA into the large ribosomal subunit, where it forms part of the central protuberance. The protein is Large ribosomal subunit protein uL18 of Chlorobaculum parvum (strain DSM 263 / NCIMB 8327) (Chlorobium vibrioforme subsp. thiosulfatophilum).